Here is a 163-residue protein sequence, read N- to C-terminus: MISTPEPLHAGHILTPFCCGVDSIDNWLEQRAMKNQTTGASRTFVCCGSDSNVLAYYSLASSAVTTNTSPGRFRRNMPDPIPVVVLGRLAVDKSLHGQGVARALVRDAGLRVIQVAETIGIRGMLVHALSDEAREFYQRVGFVPSPMDPMMLMVTLGDLVESV.

The acetyl-CoA site is built by L89, V91, H96, G97, Q98, G99, A101, R102, and E132. Y137 is a catalytic residue. An acetyl-CoA-binding site is contributed by R139.

This sequence belongs to the acetyltransferase family. GNAT subfamily. Homodimer (in absence of antitoxin). Forms a complex with cognate antitoxin TacA2. Forms a 4:2 antitoxin:toxin complex with cognate antitoxin TacA2.

It catalyses the reaction glycyl-tRNA(Gly) + acetyl-CoA = N-acetylglycyl-tRNA(Gly) + CoA + H(+). Toxic component of a type II toxin-antitoxin (TA) system. Acetylates tRNA and inhibits translation. Acetylates exclusively Gly in situ. Overexpression during the lag phase of a tacA2-tacT2 deletion strain leads to very small increase in persister cells in the presence of cefotaxime but no detectable growth phenotype in absence of antibiotics. Compared to a protein with a single amino acid change (TacT2 from S.enterica NCTC 13349, Glu-29 is Lys in NCTC 13349) this protein binds tRNA very poorly and acetylates tRNA very poorly. Persister cell formation is neutralized by cognate antitoxin TacA2. Neutralized only by cognate antitoxin TacA2 (A8), but not by TacA1 or TacA3. Plays a role in persister cell formation. Functionally, the TacA2-TacT2 complex both represses and derepresses expression of its own operon. This is tRNA-acetylating toxin 2 from Salmonella typhimurium (strain 14028s / SGSC 2262).